The chain runs to 131 residues: Conotoxin Cal8.1 (131 aa).

Positions 1–19 (MKLLLTLLLGSALMCITLA) are cleaved as a signal peptide. A propeptide spanning residues 20–38 (DECGLGTHRPVKEVIDNVR) is cleaved from the precursor.

In terms of processing, contains 4 disulfide bonds. Expressed by the venom duct.

It localises to the secreted. Functionally, probable neurotoxin with unknown target. Possibly targets ion channels. This is Conotoxin Cal8.1 from Californiconus californicus (California cone).